Here is a 274-residue protein sequence, read N- to C-terminus: Penicillin-insensitive murein endopeptidase (274 aa).

Residues 1–19 form the signal peptide; that stretch reads MKKTAIALLAWFVSSASLA. 3 cysteine pairs are disulfide-bonded: Cys44-Cys265, Cys187-Cys235, and Cys216-Cys223. Residues His110, His113, Asp120, Asp147, His150, and His211 each contribute to the Zn(2+) site. The segment at 225-274 is disordered; sequence DQPLPPPGDGCGAELQSWFEPPKPGTTKPEKKTPPPLPPSCQALLDEHVL.

It belongs to the peptidase M74 family. In terms of assembly, dimer. It depends on Zn(2+) as a cofactor.

The protein resides in the periplasm. In terms of biological role, murein endopeptidase that cleaves the D-alanyl-meso-2,6-diamino-pimelyl amide bond that connects peptidoglycan strands. Likely plays a role in the removal of murein from the sacculus. This is Penicillin-insensitive murein endopeptidase from Salmonella agona (strain SL483).